Here is a 590-residue protein sequence, read N- to C-terminus: Myo-inositol transporter 3 (590 aa).

The span at 1-26 shows a compositional bias: basic and acidic residues; that stretch reads MRTTHIEDRDNNSLENKHTDHIEGVE. Residues 1 to 40 form a disordered region; that stretch reads MRTTHIEDRDNNSLENKHTDHIEGVENGKGTQEPPSPSGF. Topologically, residues 1 to 57 are cytoplasmic; the sequence is MRTTHIEDRDNNSLENKHTDHIEGVENGKGTQEPPSPSGFGGHLIDENLVHVEGEDK. A helical membrane pass occupies residues 58–78; that stretch reads VTWYLCFLISASAIAGFLFGY. Residues 79 to 105 are Extracellular-facing; sequence DTGVVGVALPLVGTDLGGNELNSSQQE. N100 is a glycosylation site (N-linked (GlcNAc...) asparagine). A helical transmembrane segment spans residues 106–126; sequence IITAGTTIGAIFGSAILGGWG. Residues 127 to 132 lie on the Cytoplasmic side of the membrane; the sequence is DHLGRK. The helical transmembrane segment at 133–153 threads the bilayer; that stretch reads MAILISDVFFTVGAVIIASSY. Over 154–157 the chain is Extracellular; that stretch reads SVPQ. Residues 158–178 form a helical membrane-spanning segment; it reads IIVGRIVLGVGVGGAAVIAPL. The Cytoplasmic segment spans residues 179–192; it reads FITETAPTAVRGRC. The helical transmembrane segment at 193 to 213 threads the bilayer; that stretch reads IGVNAFFIPFGQLVADSIGAG. Residues 214 to 222 are Extracellular-facing; the sequence is VQNMHGGWR. The helical transmembrane segment at 223 to 243 threads the bilayer; it reads LLFALGAVPSLIQLLLFHYLP. The Cytoplasmic segment spans residues 244-325; that stretch reads ESPRILIVKG…AVSVLQAAGQ (82 aa). Residues 326 to 346 traverse the membrane as a helical segment; it reads LCGFNTLLYYAGTLFGLLGLS. The Extracellular portion of the chain corresponds to 347-349; it reads NPA. Residues 350 to 370 traverse the membrane as a helical segment; that stretch reads LGGLIPAGTNAVFVLIGMSTV. Topologically, residues 371-376 are cytoplasmic; that stretch reads DKIGRR. Residues 377–397 traverse the membrane as a helical segment; it reads GLLLVGVPVLLLGLVWNIIGF. Over 398 to 420 the chain is Extracellular; the sequence is YYMCKPTGGFLDTSYSYDTTNVG. Residues 421 to 441 form a helical membrane-spanning segment; sequence IVIGGIVFYVAGFGLTYSHLV. Over 442–455 the chain is Cytoplasmic; that stretch reads WYQAEYLALEVRSM. Residues 456-476 form a helical membrane-spanning segment; it reads GSGVATTVCWIANLVVSVSYL. Residues 477–485 are Extracellular-facing; sequence SELETMTPS. The chain crosses the membrane as a helical span at residues 486–506; the sequence is GTYGFYLGLSVIAFVFVVFCF. Topologically, residues 507–590 are cytoplasmic; that stretch reads PETKQLSIDE…GGKRKPQVLV (84 aa).

Belongs to the major facilitator superfamily. Sugar transporter (TC 2.A.1.1) family.

Its subcellular location is the cell membrane. The enzyme catalyses myo-inositol(out) + H(+)(out) = myo-inositol(in) + H(+)(in). Its function is as follows. Transporter for myo-inositol. This Cryptococcus neoformans var. grubii serotype A (strain H99 / ATCC 208821 / CBS 10515 / FGSC 9487) (Filobasidiella neoformans var. grubii) protein is Myo-inositol transporter 3.